The primary structure comprises 615 residues: 1-deoxy-D-xylulose-5-phosphate synthase (615 aa).

Thiamine diphosphate-binding positions include His-72 and 111-113 (GHS). Position 142 (Asp-142) interacts with Mg(2+). Thiamine diphosphate-binding positions include 143–144 (GA), Asn-171, Tyr-278, and Glu-360. Mg(2+) is bound at residue Asn-171.

Belongs to the transketolase family. DXPS subfamily. Homodimer. Mg(2+) serves as cofactor. It depends on thiamine diphosphate as a cofactor.

The catalysed reaction is D-glyceraldehyde 3-phosphate + pyruvate + H(+) = 1-deoxy-D-xylulose 5-phosphate + CO2. The protein operates within metabolic intermediate biosynthesis; 1-deoxy-D-xylulose 5-phosphate biosynthesis; 1-deoxy-D-xylulose 5-phosphate from D-glyceraldehyde 3-phosphate and pyruvate: step 1/1. Functionally, catalyzes the acyloin condensation reaction between C atoms 2 and 3 of pyruvate and glyceraldehyde 3-phosphate to yield 1-deoxy-D-xylulose-5-phosphate (DXP). This chain is 1-deoxy-D-xylulose-5-phosphate synthase, found in Campylobacter jejuni subsp. jejuni serotype O:6 (strain 81116 / NCTC 11828).